We begin with the raw amino-acid sequence, 215 residues long: Protein GET1 (215 aa).

Residues 1–4 are Lumenal-facing; it reads MPSL. The chain crosses the membrane as a helical span at residues 5–24; the sequence is LILIFTIEVAVELINTIGAA. Topologically, residues 25 to 110 are cytoplasmic; that stretch reads TINNLLWRIF…NFDKYITGIR (86 aa). A coiled-coil region spans residues 72-104; sequence AKWAKLRRQHDKLLEQLEKKKAALDSTKGNFDK. The helical transmembrane segment at 111–131 threads the bilayer; sequence WVGTQGLRYFLPFWYAKVPMF. Residues 132-155 lie on the Lumenal side of the membrane; sequence WLPYGWFPYYAEWLVSFPRAPMGS. The chain crosses the membrane as a helical span at residues 156–172; it reads VSIASWQLACTGFVVLI. At 173–215 the chain is on the cytoplasmic side; that stretch reads KDAITALVVFVMGMRQSNVKQAVPVKAVSGEKASDEKEGKKEL.

The protein belongs to the WRB/GET1 family. Interacts with GET3.

Its subcellular location is the endoplasmic reticulum membrane. In terms of biological role, required for the post-translational delivery of tail-anchored (TA) proteins to the endoplasmic reticulum. Acts as a membrane receptor for soluble GET3, which recognizes and selectively binds the transmembrane domain of TA proteins in the cytosol. This Pyricularia oryzae (strain 70-15 / ATCC MYA-4617 / FGSC 8958) (Rice blast fungus) protein is Protein GET1.